Consider the following 529-residue polypeptide: Peptide chain release factor 3 (529 aa).

The tr-type G domain maps to 11–280 (AKRRTFAIIS…GLVEWAPAPM (270 aa)). GTP contacts are provided by residues 20–27 (SHPDAGKT), 88–92 (DTPGH), and 142–145 (NKLD).

The protein belongs to the TRAFAC class translation factor GTPase superfamily. Classic translation factor GTPase family. PrfC subfamily.

Its subcellular location is the cytoplasm. In terms of biological role, increases the formation of ribosomal termination complexes and stimulates activities of RF-1 and RF-2. It binds guanine nucleotides and has strong preference for UGA stop codons. It may interact directly with the ribosome. The stimulation of RF-1 and RF-2 is significantly reduced by GTP and GDP, but not by GMP. The sequence is that of Peptide chain release factor 3 from Shigella flexneri.